Here is a 716-residue protein sequence, read N- to C-terminus: Segment polarity protein dishevelled homolog DVL-3 (716 aa).

Residues 1–82 form the DIX domain; the sequence is MGETKIIYHL…RVVSWLVSAE (82 aa). An Omega-N-methylarginine modification is found at Arg27. Residues Ser48 and Ser125 each carry the phosphoserine modification. The segment at 85-235 is disordered; the sequence is HPEPAPFCAD…VSRIERSSSF (151 aa). Positions 142–156 are enriched in basic and acidic residues; the sequence is QRERPRRRDGPEHAA. Low complexity predominate over residues 175 to 190; the sequence is SSSTLMSSELETTSFF. Residue Ser192 is modified to Phosphoserine. Low complexity predominate over residues 199–212; it reads SRFSSSTEQSSASR. Arg212 carries the post-translational modification Omega-N-methylarginine. Residues 213 to 226 are compositionally biased toward basic residues; that stretch reads LMRRHKRRRRKQKV. In terms of domain architecture, PDZ spans 249-321; it reads TVTLNMEKYN…NDDAVRVLRE (73 aa). Arg271 carries the asymmetric dimethylarginine; by PRMT1; alternate modification. Symmetric dimethylarginine; by PRMT7; alternate is present on residues Arg271 and Arg342. Arg342 bears the Omega-N-methylarginine; alternate mark. At Thr346 the chain carries Phosphothreonine. Positions 422-496 constitute a DEP domain; that stretch reads PESGLEVRDR…SEQCYYIFGD (75 aa). Residues 546 to 691 are disordered; the sequence is PYNPHPGFPE…PPGRDLASVP (146 aa). The span at 565-581 shows a compositional bias: low complexity; the sequence is ASSQHSEGSRSSGSNRS. Basic and acidic residues-rich tracts occupy residues 582 to 595 and 604 to 622; these read GSDRRKEKDPKAGD and ESDHTTRSSLRGPRERAPS. The residue at position 614 (Arg614) is a Symmetric dimethylarginine; by PRMT7. Composition is skewed to pro residues over residues 653–663 and 670–682; these read YGPPGVPPLYG and TPPPAAMGPPGAP. Residue Ser697 is modified to Phosphoserine. Arg698 bears the Omega-N-methylarginine; alternate mark. Arg698 is subject to Dimethylated arginine; alternate. Phosphoserine is present on Ser700.

Belongs to the DSH family. Interacts (via the PDZ domain) with the C-terminal regions of VANGL1 and VANGL2. Interacts (via the region containing both the PDZ and DEP domains) with LRRFIP2; the DIX domain may inhibit this interaction. Interacts with CYLD. Interacts with CEP164 and DAB2. Interacts with DCDC2. Interacts with FOXK1 and FOXK2. Interacts with DAAM2. Ubiquitinated. Deubiquitinated by CYLD, which acts on 'Lys-63'-linked ubiquitin chains. In terms of processing, phosphorylated by CSNK1D. Post-translationally, arginine methylation may function as a switch in regulation of function in Wnt signaling. Ubiquitous.

It localises to the cytoplasm. Functionally, involved in the signal transduction pathway mediated by multiple Wnt genes. This chain is Segment polarity protein dishevelled homolog DVL-3 (Dvl3), found in Mus musculus (Mouse).